Consider the following 148-residue polypeptide: UPF0260 protein KPK_1978 (148 aa).

The protein belongs to the UPF0260 family.

This chain is UPF0260 protein KPK_1978, found in Klebsiella pneumoniae (strain 342).